Here is a 527-residue protein sequence, read N- to C-terminus: Bifunctional purine biosynthesis protein PurH (527 aa).

One can recognise an MGS-like domain in the interval Met-1 to Thr-149.

This sequence belongs to the PurH family.

The enzyme catalyses (6R)-10-formyltetrahydrofolate + 5-amino-1-(5-phospho-beta-D-ribosyl)imidazole-4-carboxamide = 5-formamido-1-(5-phospho-D-ribosyl)imidazole-4-carboxamide + (6S)-5,6,7,8-tetrahydrofolate. The catalysed reaction is IMP + H2O = 5-formamido-1-(5-phospho-D-ribosyl)imidazole-4-carboxamide. It participates in purine metabolism; IMP biosynthesis via de novo pathway; 5-formamido-1-(5-phospho-D-ribosyl)imidazole-4-carboxamide from 5-amino-1-(5-phospho-D-ribosyl)imidazole-4-carboxamide (10-formyl THF route): step 1/1. Its pathway is purine metabolism; IMP biosynthesis via de novo pathway; IMP from 5-formamido-1-(5-phospho-D-ribosyl)imidazole-4-carboxamide: step 1/1. This Xanthomonas oryzae pv. oryzae (strain PXO99A) protein is Bifunctional purine biosynthesis protein PurH.